Reading from the N-terminus, the 1801-residue chain is MEWASGKPGRGRQGQPVPWELRLGLLLSVLAATLAQVPSLDVPGCSRGSCYPATGDLLVGRADRLTASSTCGLHSPQPYCIVSHLQDEKKCFLCDSRRPFSARDNPNSHRIQNVVTSFAPQRRTAWWQSENGVPMVTIQLDLEAEFHFTHLIMTFKTFRPAAMLVERSADFGRTWRVYRYFSYDCGADFPGIPLAPPRRWDDVVCESRYSEIEPSTEGEVIYRVLDPAIPIPDPYSSRIQNLLKITNLRVNLTRLHTLGDNLLDPRREIREKYYYALYELVIRGNCFCYGHASQCAPAPGAPAHAEGMVHGACICKHNTRGLNCEQCQDFYQDLPWHPAEDGHTHACRKCECNGHSHSCHFDMAVYLASGNVSGGVCDGCQHNTAGRHCELCRPFFYRDPTKDMRDPAACRPCDCDPMGSQDGGRCDSHDDPVLGLVSGQCRCKEHVVGTRCQQCRDGFFGLSASNPRGCQRCQCNSRGTVPGGTPCDSSSGTCFCKRLVTGDGCDRCLPGHWGLSHDLLGCRPCDCDVGGALDPQCDEATGQCPCRPHMIGRRCEQVQPGYFRPFLDHLTWEAEGAHGQVLEVVERLVTNRETPSWTGVGFVRLREGQEVEFLVTSLPRAMDYDLLLRWEPQVPEQWAELELVVQRPGPVSAHSPCGHVLPRDDRIQGMLHPNTRVLVFPRPVCLEPGLSYKLKLKLTGTGGRAHPETPYSGSGILIDSLVLQPHVLMLEMFSGGDAAALERRTTFERYRCHEEGLMPSKTPLSEACVPLLISASSLVYNGALPCQCDPQGSLSSECNPHGGQCRCKPGVVGRRCDACATGYYGFGPAGCQACQCSPDGALSALCEGTSGQCLCRTGAFGLRCDHCQRGQWGFPNCRPCVCNGRADECDAHTGACLGCRDYTGGEHCERCIAGFHGDPRLPYGGQCRPCPCPEGPGSQRHFATSCHRDGYSQQIVCHCRAGYTGLRCEACAPGHFGDPSKPGGRCQLCECSGNIDPTDPGACDPHTGQCLRCLHHTEGPHCGHCKPGFHGQAARQSCHRCTCNLLGTDPQRCPSTDLCHCDPSTGQCPCLPHVQGLSCDRCAPNFWNFTSGRGCQPCACHPSRARGPTCNEFTGQCHCHAGFGGRTCSECQELHWGDPGLQCRACDCDPRGIDKPQCHRSTGHCSCRPGVSGVRCDQCARGFSGVFPACHPCHACFGDWDRVVQDLAARTRRLEQWAQELQQTGVLGAFESSFLNLQGKLGMVQAIVAARNTSAASTAKLVEATEGLRHEIGKTTERLTQLEAELTDVQDENFNANHALSGLERDGLALNLTLRQLDQHLDILKHSNFLGAYDSIRHAHSQSTEAERRANASTFAIPSPVSNSADTRRRAEVLMGAQRENFNRQHLANQQALGRLSTHTHTLSLTGVNELVCGAPGDAPCATSPCGGAGCRDEDGQPRCGGLGCSGAAATADLALGRARHTQAELQRALVEGGGILSRVSETRRQAEEAQQRAQAALDKANASRGQVEQANQELRELIQNVKDFLSQEGADPDSIEMVATRVLDISIPASPEQIQRLASEIAERVRSLADVDTILAHTMGDVRRAEQLLQDAQRARSRAEGERQKAETVQAALEEAQRAQGAAQGAIRGAVVDTKNTEQTLQQVQERMAGTEQSLNSASERARQLHALLEALKLKRAGNSLAASTAEETAGSAQSRAREAEKQLREQVGDQYQTVRALAERKAEGVLAAQARAEQLRDEARGLLQAAQDKLQRLQELEGTYEENERELEVKAAQLDGLEARMRSVLQAINLQVQIYNTCQ.

The first 35 residues, 1 to 35, serve as a signal peptide directing secretion; the sequence is MEWASGKPGRGRQGQPVPWELRLGLLLSVLAATLA. Positions 46-285 constitute a Laminin N-terminal domain; the sequence is SRGSCYPATG…ALYELVIRGN (240 aa). An N-linked (GlcNAc...) asparagine glycan is attached at N251. 19 cysteine pairs are disulfide-bonded: C286-C295, C288-C313, C315-C324, C327-C347, C350-C359, C352-C377, C380-C389, C392-C410, C413-C426, C415-C441, C443-C452, C455-C470, C473-C487, C475-C494, C496-C505, C508-C522, C525-C537, C527-C544, and C546-C555. Laminin EGF-like domains follow at residues 286 to 349, 350 to 412, 413 to 472, and 473 to 524; these read CFCY…ACRK, CECN…ACRP, CDCD…GCQR, and CQCN…GCRP. N-linked (GlcNAc...) asparagine glycosylation is present at N371. A Laminin EGF-like 5; truncated domain is found at 525 to 555; it reads CDCDVGGALDPQCDEATGQCPCRPHMIGRRC. The Laminin IV type B domain occupies 564–780; it reads RPFLDHLTWE…LLISASSLVY (217 aa). Cystine bridges form between C786-C798, C788-C805, C807-C816, C819-C831, C834-C846, C836-C853, C855-C864, C867-C877, C880-C889, C882-C896, C899-C908, C911-C927, C930-C946, C932-C957, C959-C968, C971-C986, C989-C1003, C991-C1010, C1013-C1022, C1025-C1038, C1041-C1061, C1043-C1068, C1070-C1079, C1082-C1095, C1098-C1110, C1100-C1117, C1119-C1128, C1131-C1143, C1146-C1158, C1148-C1165, C1167-C1176, and C1179-C1190. Laminin EGF-like domains follow at residues 786-833, 834-879, 880-929, 930-988, 989-1040, 1041-1097, 1098-1145, and 1146-1192; these read CQCD…GCQA, CQCS…NCRP, CVCN…QCRP, CPCP…RCQL, CECS…SCHR, CTCN…GCQP, CACH…QCRA, and CDCD…ACHP. N-linked (GlcNAc...) asparagine glycosylation occurs at N1088. The interval 1193–1412 is domain II; the sequence is CHACFGDWDR…LSLTGVNELV (220 aa). N-linked (GlcNAc...) asparagine glycosylation is present at N1252. A coiled-coil region spans residues 1259–1306; that stretch reads AKLVEATEGLRHEIGKTTERLTQLEAELTDVQDENFNANHALSGLERD. N-linked (GlcNAc...) asparagine glycosylation is found at N1311 and N1351. Positions 1413–1445 are domain alpha; it reads CGAPGDAPCATSPCGGAGCRDEDGQPRCGGLGC. Residues 1446-1801 are domain I; that stretch reads SGAAATADLA…LQVQIYNTCQ (356 aa). Residues 1475–1529 adopt a coiled-coil conformation; it reads GILSRVSETRRQAEEAQQRAQAALDKANASRGQVEQANQELRELIQNVKDFLSQE. A glycan (N-linked (GlcNAc...) asparagine) is linked at N1502. S1535 carries the post-translational modification Phosphoserine. The stretch at 1576 to 1793 forms a coiled coil; the sequence is LAHTMGDVRR…RSVLQAINLQ (218 aa). Positions 1684–1694 are enriched in low complexity; that stretch reads ASTAEETAGSA. The segment at 1684 to 1703 is disordered; the sequence is ASTAEETAGSAQSRAREAEK.

Laminin is a complex glycoprotein, consisting of three different polypeptide chains (alpha, beta, gamma), which are bound to each other by disulfide bonds into a cross-shaped molecule comprising one long and three short arms with globules at each end. Beta-2 is a subunit of laminin-3 (laminin-121 or S-laminin), laminin-4 (laminin-221 or S-merosin), laminin-7 (laminin-321 or KS-laminin), laminin-9 (laminin-421), laminin-11 (laminin-521), laminin-14 (laminin-423) and laminin-15 (laminin-523). As to expression, found in the basement membranes (major component). S-laminin is concentrated in the synaptic cleft of the neuromuscular junction.

The protein localises to the secreted. The protein resides in the extracellular space. It localises to the extracellular matrix. It is found in the basement membrane. Its function is as follows. Binding to cells via a high affinity receptor, laminin is thought to mediate the attachment, migration and organization of cells into tissues during embryonic development by interacting with other extracellular matrix components. This is Laminin subunit beta-2 (Lamb2) from Rattus norvegicus (Rat).